Reading from the N-terminus, the 97-residue chain is Small cell adhesion glycoprotein (97 aa).

Residues 1–36 (MTSFPTTPPPAEELMATTILQATEALSPEAEASTAL) are Extracellular-facing. O-linked (GalNAc...) threonine glycosylation is present at Thr2. O-linked (GalNAc...) serine glycosylation occurs at Ser3. Residues Thr6, Thr7, Thr17, Thr18, and Thr23 are each glycosylated (O-linked (GalNAc...) threonine). The chain crosses the membrane as a helical; Signal-anchor for type III membrane protein span at residues 37–57 (IAVVITVVFLTLLSVVILIFF). Topologically, residues 58 to 97 (YLYKNKGSYVTYEPADGEPGAVVLMENDSAKGREKEEYFI) are cytoplasmic.

This sequence belongs to the SMAGP family. In terms of processing, O-glycosylated. The O-glycan is modified with sialic acid residues.

Its subcellular location is the cell membrane. The protein resides in the cytoplasmic vesicle membrane. Its function is as follows. May play a role in epithelial cell-cell contacts. May play a role in tumor invasiveness and metastasis formation. The chain is Small cell adhesion glycoprotein (SMAGP) from Bos taurus (Bovine).